Here is a 114-residue protein sequence, read N- to C-terminus: Translation initiation factor 1A (114 aa).

One can recognise an S1-like domain in the interval 19 to 91; the sequence is SEFRLPGEGE…EKGDIVHKYE (73 aa).

Belongs to the eIF-1A family.

In terms of biological role, seems to be required for maximal rate of protein biosynthesis. Enhances ribosome dissociation into subunits and stabilizes the binding of the initiator Met-tRNA(I) to 40 S ribosomal subunits. The sequence is that of Translation initiation factor 1A (eIF1A) from Pyrobaculum aerophilum (strain ATCC 51768 / DSM 7523 / JCM 9630 / CIP 104966 / NBRC 100827 / IM2).